The sequence spans 192 residues: MAQMYFYYSAMNAGKSTTLLQSSFNYQERGMTPVIFTAALDDRYGVGKVSSRIGLQSDAHLFRPDTNLYQEIAALHEVEKRHCILIDECQFLSKEQVYQLTEVVDKLHIPVLCYGLRTDFLGELFEGSKYLLSWADKLVELKTICHCGRKANMVIRTDEHGVAIKEGDQVAIGGNDRYVSVCRQHYKEALGK.

Residues 9–16 (SAMNAGKS) and 87–90 (DECQ) each bind ATP. Glu-88 (proton acceptor) is an active-site residue. Positions 145, 147, 182, and 185 each coordinate Zn(2+).

This sequence belongs to the thymidine kinase family. In terms of assembly, homotetramer.

It localises to the cytoplasm. It catalyses the reaction thymidine + ATP = dTMP + ADP + H(+). The sequence is that of Thymidine kinase from Vibrio parahaemolyticus serotype O3:K6 (strain RIMD 2210633).